An 843-amino-acid polypeptide reads, in one-letter code: Neuroligin-1 (843 aa).

A signal peptide spans 1-45 (MALPRCMWPNYVWRAMMACVVHRGSGAPLTLCLLGCLLQTFHVLS). Residues 46–697 (QKLDDVDPLV…DQRDYSTELS (652 aa)) are Extracellular-facing. Asn-109 carries N-linked (GlcNAc...) (complex) asparagine glycosylation. Cystine bridges form between Cys-117–Cys-153 and Cys-172–Cys-181. 2 N-linked (GlcNAc...) (complex) asparagine glycosylation sites follow: Asn-303 and Asn-343. 2 cysteine pairs are disulfide-bonded: Cys-342–Cys-353 and Cys-512–Cys-546. N-linked (GlcNAc...) asparagine glycosylation occurs at Asn-547. The interval 647-688 (TKVPSTDITLRPTRKNSTPVTSAFPTAKQDDPKQQPSPFSVD) is disordered. The segment covering 661-670 (KNSTPVTSAF) has biased composition (polar residues). O-linked (GalNAc...) serine glycosylation is found at Ser-683 and Ser-686. Residues 698–718 (VTIAVGASLLFLNILAFAALY) traverse the membrane as a helical segment. The Cytoplasmic portion of the chain corresponds to 719–843 (YKKDKRRHDV…HPHSHSTTRV (125 aa)). Residues 822–843 (GGQNNTLPHPHPHPHSHSTTRV) form a disordered region. Positions 831 to 843 (PHPHPHSHSTTRV) are enriched in basic residues.

This sequence belongs to the type-B carboxylesterase/lipase family. As to quaternary structure, interacts with neurexins NRXN1, NRXN2 and NRXN3. Interaction with neurexins is mediated by heparan sulfate glycan modification on neurexin. Interacts with NLGN3. Interacts (via its C-terminus) with DLG4/PSD-95 (via PDZ domain 3). Interacts with GOPC. Interacts with AIP1 and PDZRN3. In terms of processing, the N-terminus is blocked. Expressed in brain, almost exclusively in neurons, and spinal cord. Detected in pancreas islet beta cells.

It localises to the cell membrane. The protein localises to the postsynaptic density. It is found in the synaptic cleft. The protein resides in the synaptic cell membrane. Cell surface protein involved in cell-cell-interactions via its interactions with neurexin family members. Plays a role in synapse function and synaptic signal transmission, and probably mediates its effects by recruiting and clustering other synaptic proteins. May promote the initial formation of synapses, but is not essential for this. In vitro, triggers the de novo formation of presynaptic structures. May be involved in specification of excitatory synapses. Required to maintain wakefulness quality and normal synchrony of cerebral cortex activity during wakefulness and sleep. The protein is involved in nervous system development. This chain is Neuroligin-1 (Nlgn1), found in Rattus norvegicus (Rat).